A 68-amino-acid polypeptide reads, in one-letter code: Conotoxin TsMMSK-021 (68 aa).

The N-terminal stretch at methionine 1–alanine 20 is a signal peptide. Positions valine 21–arginine 52 are excised as a propeptide. Cystine bridges form between cysteine 53/cysteine 66, cysteine 54/cysteine 62, and cysteine 58/cysteine 65. The residue at position 64 (proline 64) is a 4-hydroxyproline.

It belongs to the conotoxin M superfamily. In terms of tissue distribution, expressed by the venom duct.

It localises to the secreted. The chain is Conotoxin TsMMSK-021 from Conus tessulatus (Tessellate cone).